We begin with the raw amino-acid sequence, 393 residues long: NAD(P)H-quinone oxidoreductase subunit H, chloroplastic (393 aa).

The protein belongs to the complex I 49 kDa subunit family. NDH is composed of at least 16 different subunits, 5 of which are encoded in the nucleus.

Its subcellular location is the plastid. The protein localises to the chloroplast thylakoid membrane. The catalysed reaction is a plastoquinone + NADH + (n+1) H(+)(in) = a plastoquinol + NAD(+) + n H(+)(out). The enzyme catalyses a plastoquinone + NADPH + (n+1) H(+)(in) = a plastoquinol + NADP(+) + n H(+)(out). Functionally, NDH shuttles electrons from NAD(P)H:plastoquinone, via FMN and iron-sulfur (Fe-S) centers, to quinones in the photosynthetic chain and possibly in a chloroplast respiratory chain. The immediate electron acceptor for the enzyme in this species is believed to be plastoquinone. Couples the redox reaction to proton translocation, and thus conserves the redox energy in a proton gradient. The chain is NAD(P)H-quinone oxidoreductase subunit H, chloroplastic from Agrostis stolonifera (Creeping bentgrass).